A 638-amino-acid polypeptide reads, in one-letter code: Asparagine--tRNA ligase, cytoplasmic 2 (638 aa).

The segment covering 1–16 (MESHGKTHQKEHDNDL) has biased composition (basic and acidic residues). Disordered regions lie at residues 1 to 23 (MESH…PITL) and 62 to 87 (VKKN…DQAH).

This sequence belongs to the class-II aminoacyl-tRNA synthetase family.

Its subcellular location is the cytoplasm. It localises to the cytosol. The enzyme catalyses tRNA(Asn) + L-asparagine + ATP = L-asparaginyl-tRNA(Asn) + AMP + diphosphate + H(+). In Arabidopsis thaliana (Mouse-ear cress), this protein is Asparagine--tRNA ligase, cytoplasmic 2.